A 315-amino-acid chain; its full sequence is DNA-directed RNA polymerase subunit alpha (315 aa).

Positions 1–228 (MIEIEKPKIE…EHLNLFIDLS (228 aa)) are alpha N-terminal domain (alpha-NTD). Positions 245-315 (KEKVLEMTIE…LGLSLAPSED (71 aa)) are alpha C-terminal domain (alpha-CTD).

Belongs to the RNA polymerase alpha chain family. Homodimer. The RNAP catalytic core consists of 2 alpha, 1 beta, 1 beta' and 1 omega subunit. When a sigma factor is associated with the core the holoenzyme is formed, which can initiate transcription.

The catalysed reaction is RNA(n) + a ribonucleoside 5'-triphosphate = RNA(n+1) + diphosphate. In terms of biological role, DNA-dependent RNA polymerase catalyzes the transcription of DNA into RNA using the four ribonucleoside triphosphates as substrates. The polypeptide is DNA-directed RNA polymerase subunit alpha (Acetivibrio thermocellus (strain ATCC 27405 / DSM 1237 / JCM 9322 / NBRC 103400 / NCIMB 10682 / NRRL B-4536 / VPI 7372) (Clostridium thermocellum)).